The chain runs to 459 residues: MDQSARYADLSLKEEDLIAGGKHILVAYKMKPKAGHGYLEASAHFAAESSTGTNVEVSTTDDFTKGVDALVYYIDEATEDMRIAYPMDLFDRNVTDGRMMLVSVLTLIIGNNQGMGDIEHAKIHDIYFPERAIQLFDGPSKDISDMWRILGRPIENGGYIAGTIIKPKLGLRPEPFAAAAYQFWLGGDFIKNDEPQGNQVFCPLKKVLPLVYDSMKRAQDETGQAKLFSMNITADDHYEMMARADFGLETFGPDADKLAFLVDGFVGGPGMITTARRQYPNQYLHYHRAGHGMITSPSAKRGYTAFVLAKISRLQGASGIHVGTMGYGKMEGEGDDRNIAYMIERDEAQGPVYFQKWYGMKPTTPIISGGMNALRLPGFFENLGHGNVINTAGGGSYGHIDSPAAGAISLKQAYECWKAGADPIEFAKEHKEFARAFESFPKDADAIFPGWREKLGVHK.

Residue Asn111 participates in substrate binding. The active-site Proton acceptor is the Lys166. Residue Lys168 coordinates substrate. The Mg(2+) site is built by Lys191, Asp193, and Glu194. Lys191 bears the N6-carboxylysine mark. Residue His287 is the Proton acceptor of the active site. Positions 288, 321, and 368 each coordinate substrate.

The protein belongs to the RuBisCO large chain family. Type II subfamily. As to quaternary structure, homodimer. It depends on Mg(2+) as a cofactor.

It is found in the cytoplasm. It carries out the reaction 2 (2R)-3-phosphoglycerate + 2 H(+) = D-ribulose 1,5-bisphosphate + CO2 + H2O. It catalyses the reaction D-ribulose 1,5-bisphosphate + O2 = 2-phosphoglycolate + (2R)-3-phosphoglycerate + 2 H(+). Its function is as follows. RuBisCO catalyzes two reactions: the carboxylation of D-ribulose 1,5-bisphosphate, the primary event in carbon dioxide fixation, as well as the oxidative fragmentation of the pentose substrate. Both reactions occur simultaneously and in competition at the same active site. The chain is Ribulose bisphosphate carboxylase from Halothiobacillus neapolitanus (strain ATCC 23641 / c2) (Thiobacillus neapolitanus).